The chain runs to 230 residues: Cytochrome c oxidase subunit 2 (230 aa).

Over 1-14 (MAHPTQLGFQDAAS) the chain is Mitochondrial intermembrane. Residues 15–45 (PVMEELLHFHDHALMIVFLISTLVLYIIIAM) traverse the membrane as a helical segment. Topologically, residues 46–59 (VSTKLTNKYILDSQ) are mitochondrial matrix. The helical transmembrane segment at 60-87 (EIEIVWTILPAVILVLIALPSLRILYLM) threads the bilayer. Topologically, residues 88–230 (DEINDPHLTI…NWSSLMLEDA (143 aa)) are mitochondrial intermembrane. Histidine 161, cysteine 196, glutamate 198, cysteine 200, histidine 204, and methionine 207 together coordinate Cu cation. Mg(2+) is bound at residue glutamate 198.

This sequence belongs to the cytochrome c oxidase subunit 2 family. In terms of assembly, component of the cytochrome c oxidase (complex IV, CIV), a multisubunit enzyme composed of 14 subunits. The complex is composed of a catalytic core of 3 subunits MT-CO1, MT-CO2 and MT-CO3, encoded in the mitochondrial DNA, and 11 supernumerary subunits COX4I, COX5A, COX5B, COX6A, COX6B, COX6C, COX7A, COX7B, COX7C, COX8 and NDUFA4, which are encoded in the nuclear genome. The complex exists as a monomer or a dimer and forms supercomplexes (SCs) in the inner mitochondrial membrane with NADH-ubiquinone oxidoreductase (complex I, CI) and ubiquinol-cytochrome c oxidoreductase (cytochrome b-c1 complex, complex III, CIII), resulting in different assemblies (supercomplex SCI(1)III(2)IV(1) and megacomplex MCI(2)III(2)IV(2)). Found in a complex with TMEM177, COA6, COX18, COX20, SCO1 and SCO2. Interacts with TMEM177 in a COX20-dependent manner. Interacts with COX20. Interacts with COX16. It depends on Cu cation as a cofactor.

The protein localises to the mitochondrion inner membrane. The catalysed reaction is 4 Fe(II)-[cytochrome c] + O2 + 8 H(+)(in) = 4 Fe(III)-[cytochrome c] + 2 H2O + 4 H(+)(out). Component of the cytochrome c oxidase, the last enzyme in the mitochondrial electron transport chain which drives oxidative phosphorylation. The respiratory chain contains 3 multisubunit complexes succinate dehydrogenase (complex II, CII), ubiquinol-cytochrome c oxidoreductase (cytochrome b-c1 complex, complex III, CIII) and cytochrome c oxidase (complex IV, CIV), that cooperate to transfer electrons derived from NADH and succinate to molecular oxygen, creating an electrochemical gradient over the inner membrane that drives transmembrane transport and the ATP synthase. Cytochrome c oxidase is the component of the respiratory chain that catalyzes the reduction of oxygen to water. Electrons originating from reduced cytochrome c in the intermembrane space (IMS) are transferred via the dinuclear copper A center (CU(A)) of subunit 2 and heme A of subunit 1 to the active site in subunit 1, a binuclear center (BNC) formed by heme A3 and copper B (CU(B)). The BNC reduces molecular oxygen to 2 water molecules using 4 electrons from cytochrome c in the IMS and 4 protons from the mitochondrial matrix. In Carassius auratus (Goldfish), this protein is Cytochrome c oxidase subunit 2 (mt-co2).